The following is a 176-amino-acid chain: Ribosome maturation factor RimM (176 aa).

The PRC barrel domain occupies 97–176; the sequence is EDEFYWRDLI…QILVDWDPDF (80 aa).

It belongs to the RimM family. As to quaternary structure, binds ribosomal protein uS19.

It is found in the cytoplasm. Functionally, an accessory protein needed during the final step in the assembly of 30S ribosomal subunit, possibly for assembly of the head region. Essential for efficient processing of 16S rRNA. May be needed both before and after RbfA during the maturation of 16S rRNA. It has affinity for free ribosomal 30S subunits but not for 70S ribosomes. This chain is Ribosome maturation factor RimM, found in Shewanella sp. (strain ANA-3).